The primary structure comprises 470 residues: MSKKYDAGVKEYRDTYWTPDYVPLDTDLLACFKCTGQEGVPREEVAAAVAAESSTGTWSTVWSELLTDLEFYKGRCYRIEDVPGDKESFYAFIAYPLDLFEEGSITNVLTSLVGNVFGFKALRHLRLEDIRFPMAFIKTCGGPPNGIVVERDRLNKYGRPLLGCTIKPKLGLSGKNYGRVVYECLRGGLDLTKDDENINSQPFQRWRERFEFVAEAVKLAQQETGEVKGHYLNCTATTPEEMYERAEFAKELDMPIIMHDYITGGFTANTGLANWCRKNGMLLHIHRAMHAVIDRHPKHGIHFRVLAKCLRLSGGDQLHTGTVVGKLEGDRQTTLGYIDNLRESFVPEDRSRGNFFDQDWGSMPGVFAVASGGIHVWHMPALLAIFGDDSCLQFGGGTHGHPWGSAAGAAANRVALEACVKARNAGREIEKESRDILMEAAKHSPELAIALETWKEIKFEFDTVDKLDVQ.

Substrate is bound by residues asparagine 115 and threonine 165. Lysine 167 acts as the Proton acceptor in catalysis. Lysine 169 contributes to the substrate binding site. Mg(2+)-binding residues include lysine 193, aspartate 195, and glutamate 196. Position 193 is an N6-carboxylysine (lysine 193). Histidine 286 functions as the Proton acceptor in the catalytic mechanism. Arginine 287, histidine 319, and serine 371 together coordinate substrate.

It belongs to the RuBisCO large chain family. Type I subfamily. Heterohexadecamer of 8 large chains and 8 small chains. Forms a CsoS2-CsoS1-RuBisCO complex. The cofactor is Mg(2+).

The protein localises to the carboxysome. It carries out the reaction 2 (2R)-3-phosphoglycerate + 2 H(+) = D-ribulose 1,5-bisphosphate + CO2 + H2O. The enzyme catalyses D-ribulose 1,5-bisphosphate + O2 = 2-phosphoglycolate + (2R)-3-phosphoglycerate + 2 H(+). Its function is as follows. RuBisCO catalyzes two reactions: the carboxylation of D-ribulose 1,5-bisphosphate, the primary event in carbon dioxide fixation, as well as the oxidative fragmentation of the pentose substrate in the photorespiration process. Both reactions occur simultaneously and in competition at the same active site. This Prochlorococcus marinus (strain MIT 9313) protein is Ribulose bisphosphate carboxylase large chain.